Here is a 1097-residue protein sequence, read N- to C-terminus: FHIP family protein GK23746 (1097 aa).

A compositionally biased stretch (polar residues) spans 1-21; that stretch reads MSWLRSSPLRQSLTRTTSSGN. The interval 1–25 is disordered; the sequence is MSWLRSSPLRQSLTRTTSSGNGIRP. Position 491 is a phosphoserine (serine 491). 3 disordered regions span residues 639-684, 820-856, and 932-1042; these read DVSA…SGRR, NENSPLHQQQSLQHPHHLQPLPAPQQTGAGAQQRSAY, and NNQQ…SEPV. The segment covering 641–654 has biased composition (low complexity); the sequence is SASSGNGTGSVVVG. Serine 823 is modified (phosphoserine). Composition is skewed to low complexity over residues 824–852 and 932–948; these read PLHQQQSLQHPHHLQPLPAPQQTGAGAQQ and NNQQSSNQTHLNSSSSS. Polar residues predominate over residues 949-962; sequence AVTTCETSLSTQPH. The span at 973-985 shows a compositional bias: low complexity; sequence TTSSTISTSSGTT. The span at 986–995 shows a compositional bias: gly residues; the sequence is AGSGGGGGSG. Composition is skewed to low complexity over residues 996 to 1006 and 1013 to 1022; these read SNSSFSIGGST and SNNTTNSSST.

Belongs to the FHIP family.

The chain is FHIP family protein GK23746 from Drosophila willistoni (Fruit fly).